Reading from the N-terminus, the 434-residue chain is Serine--tRNA ligase (434 aa).

Thr239–Glu241 provides a ligand contact to L-serine. Arg270–Glu272 lines the ATP pocket. Glu293 provides a ligand contact to L-serine. ATP is bound at residue Glu357–Ser360. Ser392 provides a ligand contact to L-serine.

This sequence belongs to the class-II aminoacyl-tRNA synthetase family. Type-1 seryl-tRNA synthetase subfamily. As to quaternary structure, homodimer. The tRNA molecule binds across the dimer.

Its subcellular location is the cytoplasm. The enzyme catalyses tRNA(Ser) + L-serine + ATP = L-seryl-tRNA(Ser) + AMP + diphosphate + H(+). The catalysed reaction is tRNA(Sec) + L-serine + ATP = L-seryl-tRNA(Sec) + AMP + diphosphate + H(+). Its pathway is aminoacyl-tRNA biosynthesis; selenocysteinyl-tRNA(Sec) biosynthesis; L-seryl-tRNA(Sec) from L-serine and tRNA(Sec): step 1/1. Catalyzes the attachment of serine to tRNA(Ser). Is also able to aminoacylate tRNA(Sec) with serine, to form the misacylated tRNA L-seryl-tRNA(Sec), which will be further converted into selenocysteinyl-tRNA(Sec). This chain is Serine--tRNA ligase, found in Cupriavidus necator (strain ATCC 17699 / DSM 428 / KCTC 22496 / NCIMB 10442 / H16 / Stanier 337) (Ralstonia eutropha).